We begin with the raw amino-acid sequence, 237 residues long: Uridylate kinase (237 aa).

11–14 (KLSG) contacts ATP. Gly53 is a binding site for UMP. ATP is bound by residues Gly54 and Arg58. Residues Asp73 and 134–141 (TGNPFFTT) each bind UMP. Positions 161, 167, and 170 each coordinate ATP.

The protein belongs to the UMP kinase family. As to quaternary structure, homohexamer.

The protein localises to the cytoplasm. The enzyme catalyses UMP + ATP = UDP + ADP. It functions in the pathway pyrimidine metabolism; CTP biosynthesis via de novo pathway; UDP from UMP (UMPK route): step 1/1. Its activity is regulated as follows. Inhibited by UTP. Catalyzes the reversible phosphorylation of UMP to UDP. The chain is Uridylate kinase from Nitrosomonas eutropha (strain DSM 101675 / C91 / Nm57).